Consider the following 65-residue polypeptide: MPKMKTNRAAAKRFRKTASGKYKAGHANRSHILTKKATKRKRNLRQQNHVRAEDAGRLDRMLPYL.

The disordered stretch occupies residues 1–65 (MPKMKTNRAA…GRLDRMLPYL (65 aa)). Over residues 10–44 (AAKRFRKTASGKYKAGHANRSHILTKKATKRKRNL) the composition is skewed to basic residues. The span at 50-65 (VRAEDAGRLDRMLPYL) shows a compositional bias: basic and acidic residues.

Belongs to the bacterial ribosomal protein bL35 family.

In Xylella fastidiosa (strain M12), this protein is Large ribosomal subunit protein bL35.